A 407-amino-acid polypeptide reads, in one-letter code: Phosphoglycerate kinase (407 aa).

Residues 27 to 29, R43, 66 to 69, R125, and R165 each bind substrate; these read DLN and HLGR. Residues K215, G303, E334, and 363–366 contribute to the ATP site; that span reads GGDS.

This sequence belongs to the phosphoglycerate kinase family. In terms of assembly, monomer.

Its subcellular location is the cytoplasm. It carries out the reaction (2R)-3-phosphoglycerate + ATP = (2R)-3-phospho-glyceroyl phosphate + ADP. It functions in the pathway carbohydrate degradation; glycolysis; pyruvate from D-glyceraldehyde 3-phosphate: step 2/5. In Mycobacterium sp. (strain JLS), this protein is Phosphoglycerate kinase.